The sequence spans 99 residues: Large ribosomal subunit protein uL23 (99 aa).

Belongs to the universal ribosomal protein uL23 family. In terms of assembly, part of the 50S ribosomal subunit. Contacts protein L29, and trigger factor when it is bound to the ribosome.

Its function is as follows. One of the early assembly proteins it binds 23S rRNA. One of the proteins that surrounds the polypeptide exit tunnel on the outside of the ribosome. Forms the main docking site for trigger factor binding to the ribosome. In Agathobacter rectalis (strain ATCC 33656 / DSM 3377 / JCM 17463 / KCTC 5835 / VPI 0990) (Eubacterium rectale), this protein is Large ribosomal subunit protein uL23.